The sequence spans 232 residues: E3 ubiquitin-protein ligase RNF125 (232 aa).

Positions 1-10 (MGSVLSSDSG) are enriched in polar residues. The segment at 1 to 27 (MGSVLSSDSGKSAPPSATPRALERRGD) is disordered. The N-myristoyl glycine moiety is linked to residue Gly-2. Zn(2+) is bound by residues Cys-37 and Cys-40. The RING-type zinc-finger motif lies at 37–76 (CAVCLEVLHQPVRTRCGHVFCRSCIATSLKNNKWTCPYCR). The interaction with the C2HC RNF-type zinc finger stretch occupies residues 43-45 (VLH). Residues Cys-52, His-54, Cys-57, Cys-60, Cys-72, Cys-75, Cys-100, and Cys-103 each contribute to the Zn(2+) site. Residues 100–119 (CAECDTLVCLGEMRAHIRTC) form a C2HC RNF-type zinc finger. The interval 109 to 113 (LGEMR) is interaction with the RING-type zinc finger. Zn(2+) is bound by residues His-115 and Cys-119. Residues 120–128 (QKYIDKYGP) form a linker region region. Residues 210 to 224 (EEALIRRVLDRSLLE) form a required for interaction with ubiquitin and for autoubiquitination region.

In terms of assembly, interacts with UBE2D1. Interacts with VCP/p97; leading to recruit RNF125 to RIGI and promote ubiquitination of RIGI. Post-translationally, autoubiquitinated, leading to its subsequent proteasomal degradation.

Its subcellular location is the golgi apparatus membrane. It catalyses the reaction S-ubiquitinyl-[E2 ubiquitin-conjugating enzyme]-L-cysteine + [acceptor protein]-L-lysine = [E2 ubiquitin-conjugating enzyme]-L-cysteine + N(6)-ubiquitinyl-[acceptor protein]-L-lysine.. The protein operates within protein modification; protein ubiquitination. Its function is as follows. E3 ubiquitin-protein ligase that mediates ubiquitination and subsequent proteasomal degradation of target proteins, such as RIGI, MAVS/IPS1, IFIH1/MDA5, JAK1 and p53/TP53. Acts as a negative regulator of type I interferon production by mediating ubiquitination of RIGI at 'Lys-181', leading to RIGI degradation. Mediates ubiquitination and subsequent degradation of p53/TP53. Mediates ubiquitination and subsequent degradation of JAK1. Acts as a positive regulator of T-cell activation. The sequence is that of E3 ubiquitin-protein ligase RNF125 (RNF125) from Macaca fascicularis (Crab-eating macaque).